Consider the following 564-residue polypeptide: Copine-8 (564 aa).

C2 domains are found at residues 1 to 133 (MDSR…RLEK) and 142 to 265 (KCGT…FNVY). Residues Asp39, Asp45, Asp99, Asp101, Ser104, Lys109, Asp111, Asp173, Asp179, Asp235, Asp237, and Asp243 each coordinate Ca(2+). Position 260 is a phosphoserine (Ser260). The VWFA domain occupies 309–510 (NFTVAIDFTA…VQFVPFRDYI (202 aa)).

The protein belongs to the copine family. Requires Ca(2+) as cofactor.

Its function is as follows. Probable calcium-dependent phospholipid-binding protein that may play a role in calcium-mediated intracellular processes. This is Copine-8 from Homo sapiens (Human).